The sequence spans 156 residues: Ribosomal RNA large subunit methyltransferase H (156 aa).

S-adenosyl-L-methionine contacts are provided by residues L73, G104, and 123 to 128 (LSALTL).

It belongs to the RNA methyltransferase RlmH family. As to quaternary structure, homodimer.

Its subcellular location is the cytoplasm. It catalyses the reaction pseudouridine(1915) in 23S rRNA + S-adenosyl-L-methionine = N(3)-methylpseudouridine(1915) in 23S rRNA + S-adenosyl-L-homocysteine + H(+). Functionally, specifically methylates the pseudouridine at position 1915 (m3Psi1915) in 23S rRNA. In Colwellia psychrerythraea (strain 34H / ATCC BAA-681) (Vibrio psychroerythus), this protein is Ribosomal RNA large subunit methyltransferase H.